The chain runs to 596 residues: UDP-glucuronate:xylan alpha-glucuronosyltransferase 2 (596 aa).

Residues 17 to 37 (LIRFNLVLLGFSFLLYTAIFF) form a helical; Signal-anchor for type II membrane protein membrane-spanning segment. Positions 395 and 397 each coordinate Mn(2+). Substrate-binding positions include 395 to 397 (DAD), 424 to 426 (NSG), 451 to 455 (NGGDQ), and 504 to 509 (HYLGWK). H504 is a binding site for Mn(2+).

Belongs to the glycosyltransferase 8 family. Glycogenin subfamily. The cofactor is Mn(2+).

Its subcellular location is the golgi apparatus membrane. Functionally, glycosyltransferase required for the addition of both glucuronic acid and 4-O-methylglucuronic acid branches to xylan in stem cell walls. In association with GUX1, is responsible for almost all of the substitutions of the xylan backbone in stem glucuronoxylan. The polypeptide is UDP-glucuronate:xylan alpha-glucuronosyltransferase 2 (GUX2) (Arabidopsis thaliana (Mouse-ear cress)).